The primary structure comprises 130 residues: MSMQDPVADMLTRIRNGQLANKYSVKMPSSKLKKSIIQLLKEEGYIKDYNVTGDTKLELEVFLKYFQGKSVVDMIQRISRPSLRIYKNKNNLPKVMSGLGIAVISTSKGVMTDRMARQEGLGGEVICYVA.

The protein belongs to the universal ribosomal protein uS8 family. Part of the 30S ribosomal subunit. Contacts proteins S5 and S12.

Functionally, one of the primary rRNA binding proteins, it binds directly to 16S rRNA central domain where it helps coordinate assembly of the platform of the 30S subunit. This chain is Small ribosomal subunit protein uS8, found in Buchnera aphidicola subsp. Acyrthosiphon pisum (strain 5A).